The chain runs to 445 residues: Trimethylamine monooxygenase (445 aa).

The FAD site is built by S14, E39, Q41, L47, W48, and H64. 2 residues coordinate NADP(+): W72 and N74. N74 and V127 together coordinate FAD. T204, S205, S207, and R228 together coordinate NADP(+). 2 residues coordinate FAD: Q317 and T320. Position 411 (R411) interacts with NADP(+).

Belongs to the FMO family. It depends on FAD as a cofactor.

The catalysed reaction is trimethylamine + NADPH + O2 = trimethylamine N-oxide + NADP(+) + H2O. Catalyzes the oxidation of trimethylamine (TMA) to produce trimethylamine N-oxide (TMAO). In vitro, has a broad substrate specificity, oxidizing many nitrogen- and sulfur-containing compounds, including dimethylamine (DMA), dimethylsulfide (DMS) and dimethylsulfoxide (DMSO). The sequence is that of Trimethylamine monooxygenase from Roseovarius sp. (strain 217).